The following is a 93-amino-acid chain: Large ribosomal subunit protein bL31B (93 aa).

This sequence belongs to the bacterial ribosomal protein bL31 family. Type B subfamily. As to quaternary structure, part of the 50S ribosomal subunit.

This Psychrobacter arcticus (strain DSM 17307 / VKM B-2377 / 273-4) protein is Large ribosomal subunit protein bL31B.